The chain runs to 228 residues: Deoxyribose-phosphate aldolase (228 aa).

Aspartate 96 functions as the Proton donor/acceptor in the catalytic mechanism. Lysine 157 serves as the catalytic Schiff-base intermediate with acetaldehyde. Lysine 185 (proton donor/acceptor) is an active-site residue.

This sequence belongs to the DeoC/FbaB aldolase family. DeoC type 1 subfamily.

Its subcellular location is the cytoplasm. It catalyses the reaction 2-deoxy-D-ribose 5-phosphate = D-glyceraldehyde 3-phosphate + acetaldehyde. The protein operates within carbohydrate degradation; 2-deoxy-D-ribose 1-phosphate degradation; D-glyceraldehyde 3-phosphate and acetaldehyde from 2-deoxy-alpha-D-ribose 1-phosphate: step 2/2. Functionally, catalyzes a reversible aldol reaction between acetaldehyde and D-glyceraldehyde 3-phosphate to generate 2-deoxy-D-ribose 5-phosphate. This Picosynechococcus sp. (strain ATCC 27264 / PCC 7002 / PR-6) (Agmenellum quadruplicatum) protein is Deoxyribose-phosphate aldolase.